We begin with the raw amino-acid sequence, 236 residues long: GTP cyclohydrolase 1 (236 aa).

Residues 1–52 (MAAARSCNGYARREGPPSPKLGTEKPRVSAGSGGSGDGWRGERPRSEEDNEL) form a disordered region. The Zn(2+) site is built by C127, H130, and C198.

This sequence belongs to the GTP cyclohydrolase I family. In terms of assembly, toroid-shaped homodecamer, composed of two pentamers of five dimers.

The protein localises to the cytoplasm. It is found in the nucleus. The catalysed reaction is GTP + H2O = 7,8-dihydroneopterin 3'-triphosphate + formate + H(+). The protein operates within cofactor biosynthesis; 7,8-dihydroneopterin triphosphate biosynthesis; 7,8-dihydroneopterin triphosphate from GTP: step 1/1. Its activity is regulated as follows. GTP shows a positive allosteric effect, and tetrahydrobiopterin inhibits the enzyme activity. Zinc is required for catalytic activity. Inhibited by Mg(2+). Functionally, may positively regulate nitric oxide synthesis in endothelial cells. May be involved in dopamine synthesis. May modify pain sensitivity and persistence. The chain is GTP cyclohydrolase 1 (GCH1) from Gallus gallus (Chicken).